The sequence spans 496 residues: Chromosomal replication initiator protein DnaA (496 aa).

The tract at residues 1 to 76 (MKMDSAVSEE…TELWQEENPQ (76 aa)) is domain I, interacts with DnaA modulators. Positions 76–150 (QILKVEVVVR…AAATDAVLGS (75 aa)) are domain II. The domain III, AAA+ region stretch occupies residues 151–373 (PLDPRYTFDT…GAFNQLLFRQ (223 aa)). 4 residues coordinate ATP: glycine 197, glycine 199, lysine 200, and threonine 201. A domain IV, binds dsDNA region spans residues 374 to 496 (SFEPNISIDR…LKRLINDQAA (123 aa)).

This sequence belongs to the DnaA family. As to quaternary structure, oligomerizes as a right-handed, spiral filament on DNA at oriC.

The protein resides in the cytoplasm. Plays an essential role in the initiation and regulation of chromosomal replication. ATP-DnaA binds to the origin of replication (oriC) to initiate formation of the DNA replication initiation complex once per cell cycle. Binds the DnaA box (a 9 base pair repeat at the origin) and separates the double-stranded (ds)DNA. Forms a right-handed helical filament on oriC DNA; dsDNA binds to the exterior of the filament while single-stranded (ss)DNA is stabiized in the filament's interior. The ATP-DnaA-oriC complex binds and stabilizes one strand of the AT-rich DNA unwinding element (DUE), permitting loading of DNA polymerase. After initiation quickly degrades to an ADP-DnaA complex that is not apt for DNA replication. Binds acidic phospholipids. This chain is Chromosomal replication initiator protein DnaA, found in Brucella suis biovar 1 (strain 1330).